Here is a 209-residue protein sequence, read N- to C-terminus: Protein-L-isoaspartate O-methyltransferase (209 aa).

Serine 59 is a catalytic residue.

The protein belongs to the methyltransferase superfamily. L-isoaspartyl/D-aspartyl protein methyltransferase family. Monomer.

It is found in the cytoplasm. The catalysed reaction is [protein]-L-isoaspartate + S-adenosyl-L-methionine = [protein]-L-isoaspartate alpha-methyl ester + S-adenosyl-L-homocysteine. Catalyzes the methyl esterification of L-isoaspartyl residues in peptides and proteins that result from spontaneous decomposition of normal L-aspartyl and L-asparaginyl residues. It plays a role in the repair and/or degradation of damaged proteins. The protein is Protein-L-isoaspartate O-methyltransferase (pcm) of Helicobacter pylori (strain J99 / ATCC 700824) (Campylobacter pylori J99).